The sequence spans 176 residues: Xanthine-guanine phosphoribosyltransferase (176 aa).

5-phospho-alpha-D-ribose 1-diphosphate-binding positions include 51-52 (RG), arginine 88, and 111-119 (DDLVDSGKT). Arginine 88 serves as a coordination point for GMP. Aspartate 112 serves as a coordination point for Mg(2+). Guanine-binding residues include aspartate 115 and isoleucine 158. Xanthine contacts are provided by aspartate 115 and isoleucine 158. GMP-binding positions include 115–119 (DSGKT) and 157–158 (WI).

It belongs to the purine/pyrimidine phosphoribosyltransferase family. XGPT subfamily. In terms of assembly, homotetramer. Mg(2+) is required as a cofactor.

It is found in the cell inner membrane. It catalyses the reaction GMP + diphosphate = guanine + 5-phospho-alpha-D-ribose 1-diphosphate. It carries out the reaction XMP + diphosphate = xanthine + 5-phospho-alpha-D-ribose 1-diphosphate. The catalysed reaction is IMP + diphosphate = hypoxanthine + 5-phospho-alpha-D-ribose 1-diphosphate. Its pathway is purine metabolism; GMP biosynthesis via salvage pathway; GMP from guanine: step 1/1. The protein operates within purine metabolism; XMP biosynthesis via salvage pathway; XMP from xanthine: step 1/1. Its function is as follows. Purine salvage pathway enzyme that catalyzes the transfer of the ribosyl-5-phosphate group from 5-phospho-alpha-D-ribose 1-diphosphate (PRPP) to the N9 position of the 6-oxopurines guanine and xanthine to form the corresponding ribonucleotides GMP (guanosine 5'-monophosphate) and XMP (xanthosine 5'-monophosphate), with the release of PPi. To a lesser extent, also acts on hypoxanthine. The protein is Xanthine-guanine phosphoribosyltransferase of Ruegeria sp. (strain TM1040) (Silicibacter sp.).